Reading from the N-terminus, the 266-residue chain is tRNA pseudouridine synthase A (266 aa).

Asp53 functions as the Nucleophile in the catalytic mechanism. A substrate-binding site is contributed by Tyr109.

This sequence belongs to the tRNA pseudouridine synthase TruA family.

The enzyme catalyses uridine(38/39/40) in tRNA = pseudouridine(38/39/40) in tRNA. Its function is as follows. Formation of pseudouridine at positions 38, 39 and 40 in the anticodon stem and loop of transfer RNAs. The polypeptide is tRNA pseudouridine synthase A (Methanocella arvoryzae (strain DSM 22066 / NBRC 105507 / MRE50)).